The primary structure comprises 192 residues: N-terminal acetyltransferase A complex catalytic subunit NAA10 (192 aa).

The 151-residue stretch at 2-152 (VCIRRATVDD…DAYDMRKNLK (151 aa)) folds into the N-acetyltransferase domain.

This sequence belongs to the acetyltransferase family. ARD1 subfamily. As to quaternary structure, part of the NatA complex. Interacts with NAA15. As to expression, expressed in leaves, roots, shoots and flowers.

It catalyses the reaction N-terminal glycyl-[protein] + acetyl-CoA = N-terminal N(alpha)-acetylglycyl-[protein] + CoA + H(+). It carries out the reaction N-terminal L-alanyl-[protein] + acetyl-CoA = N-terminal N(alpha)-acetyl-L-alanyl-[protein] + CoA + H(+). The enzyme catalyses N-terminal L-seryl-[protein] + acetyl-CoA = N-terminal N(alpha)-acetyl-L-seryl-[protein] + CoA + H(+). The catalysed reaction is N-terminal L-valyl-[protein] + acetyl-CoA = N-terminal N(alpha)-acetyl-L-valyl-[protein] + CoA + H(+). It catalyses the reaction N-terminal L-cysteinyl-[protein] + acetyl-CoA = N-terminal N(alpha)-acetyl-L-cysteinyl-[protein] + CoA + H(+). It carries out the reaction N-terminal L-threonyl-[protein] + acetyl-CoA = N-terminal N(alpha)-acetyl-L-threonyl-[protein] + CoA + H(+). Catalytic subunit of the NatA N-alpha-acetyltransferase complex. Required for male gametocyte development, embryogenesis, suspensor development and the formation of the quiescent center (QC) in the root meristem. Involved in plant immunity through the regulation of SNC1 and RPM1 stability. The protein is N-terminal acetyltransferase A complex catalytic subunit NAA10 of Arabidopsis thaliana (Mouse-ear cress).